The primary structure comprises 405 residues: Probable tRNA sulfurtransferase (405 aa).

Residues 75 to 183 (PRAAGAAADV…QNLAYVYLET (109 aa)) enclose the THUMP domain. Residues 201–202 (LM), Lys285, Gly307, and Gln316 contribute to the ATP site.

This sequence belongs to the ThiI family.

It is found in the cytoplasm. It carries out the reaction [ThiI sulfur-carrier protein]-S-sulfanyl-L-cysteine + a uridine in tRNA + 2 reduced [2Fe-2S]-[ferredoxin] + ATP + H(+) = [ThiI sulfur-carrier protein]-L-cysteine + a 4-thiouridine in tRNA + 2 oxidized [2Fe-2S]-[ferredoxin] + AMP + diphosphate. The enzyme catalyses [ThiS sulfur-carrier protein]-C-terminal Gly-Gly-AMP + S-sulfanyl-L-cysteinyl-[cysteine desulfurase] + AH2 = [ThiS sulfur-carrier protein]-C-terminal-Gly-aminoethanethioate + L-cysteinyl-[cysteine desulfurase] + A + AMP + 2 H(+). The protein operates within cofactor biosynthesis; thiamine diphosphate biosynthesis. Catalyzes the ATP-dependent transfer of a sulfur to tRNA to produce 4-thiouridine in position 8 of tRNAs, which functions as a near-UV photosensor. Also catalyzes the transfer of sulfur to the sulfur carrier protein ThiS, forming ThiS-thiocarboxylate. This is a step in the synthesis of thiazole, in the thiamine biosynthesis pathway. The sulfur is donated as persulfide by IscS. The sequence is that of Probable tRNA sulfurtransferase from Methanosarcina mazei (strain ATCC BAA-159 / DSM 3647 / Goe1 / Go1 / JCM 11833 / OCM 88) (Methanosarcina frisia).